The primary structure comprises 1032 residues: Exo-beta-D-glucosaminidase (1032 aa).

A signal peptide spans 1–32 (MSFRQKRTRIPLLAMTVTALAAAVCGVTTAPA). A propeptide spanning residues 33–46 (ATGAEVAVPLSVGA) is cleaved from the precursor. Aspartate 469 functions as the Proton donor in the catalytic mechanism. Residue glutamate 541 is the Nucleophile of the active site. A disordered region spans residues 883–908 (SVRISGWNTGTQTVPADGSGPGPSDP). A CBM6 domain is found at 909 to 1032 (VDYQAEDATI…GGPNVDKITL (124 aa)).

The protein belongs to the glycosyl hydrolase 2 family. In terms of assembly, monomer.

It localises to the secreted. The enzyme catalyses Hydrolysis of chitosan or chitosan oligosaccharides to remove successive D-glucosamine residues from the non-reducing termini.. Its function is as follows. Hydrolyzes chitosan and chitooligosaccharides with retention of anomeric configuration. Has maximum activity on chitotetraose, chitopentaose and their corresponding alcohols, with a slight decrease in the rate of hydrolysis on longer chains. Has no activity against beta-D-glucopyranoside, beta-D-xylopyranoside, beta-D-mannoside, beta-D-glucuronide, beta-D-galactoside, beta-D-N-acetylgalactosamide, beta-D-N-acetylglucosaminide and alpha-D-N-acetylglucosaminide. This Amycolatopsis orientalis (Nocardia orientalis) protein is Exo-beta-D-glucosaminidase.